A 597-amino-acid polypeptide reads, in one-letter code: Alkyldihydroxyacetonephosphate synthase (597 aa).

In terms of domain architecture, FAD-binding PCMH-type spans 131–313; sequence IPRLPDIVVW…SEVTIKIFPI (183 aa). FAD contacts are provided by residues 163-169, 232-238, 245-248, and 297-303; these read PIGGGTS, DSIEFST, TRAS, and EGTLGVV. Residue Arg-444 participates in substrate binding. The Proton donor/acceptor role is filled by Tyr-507. Residues 544–546 are important for enzyme activity; it reads HHH. The Microbody targeting signal signature appears at 595–597; sequence CKL.

Belongs to the FAD-binding oxidoreductase/transferase type 4 family. As to quaternary structure, homodimer. Requires FAD as cofactor.

It is found in the peroxisome. The enzyme catalyses a long chain fatty alcohol + a 1-acylglycerone 3-phosphate = a 1-O-alkylglycerone 3-phosphate + a long-chain fatty acid + H(+). It functions in the pathway glycerolipid metabolism; ether lipid biosynthesis. In terms of biological role, catalyzes the exchange of an acyl for a long-chain alkyl group and the formation of the ether bond in the biosynthesis of ether phospholipids. This Caenorhabditis elegans protein is Alkyldihydroxyacetonephosphate synthase (ads-1).